Here is a 390-residue protein sequence, read N- to C-terminus: Lipid-A-disaccharide synthase (390 aa).

It belongs to the LpxB family.

It catalyses the reaction a lipid X + a UDP-2-N,3-O-bis[(3R)-3-hydroxyacyl]-alpha-D-glucosamine = a lipid A disaccharide + UDP + H(+). It participates in bacterial outer membrane biogenesis; LPS lipid A biosynthesis. Its function is as follows. Condensation of UDP-2,3-diacylglucosamine and 2,3-diacylglucosamine-1-phosphate to form lipid A disaccharide, a precursor of lipid A, a phosphorylated glycolipid that anchors the lipopolysaccharide to the outer membrane of the cell. The sequence is that of Lipid-A-disaccharide synthase from Rickettsia felis (strain ATCC VR-1525 / URRWXCal2) (Rickettsia azadi).